A 219-amino-acid polypeptide reads, in one-letter code: Uridylate kinase (219 aa).

ATP is bound at residue 9 to 10; the sequence is GS. Gly-41 serves as a coordination point for UMP. Residues Gly-42 and Arg-46 each coordinate ATP. UMP is bound by residues Asp-63 and 110–116; that span reads TFPGHTT. ATP is bound by residues Thr-136, Asn-137, Tyr-142, and Asp-145.

It belongs to the UMP kinase family. Homohexamer.

It localises to the cytoplasm. The catalysed reaction is UMP + ATP = UDP + ADP. It participates in pyrimidine metabolism; CTP biosynthesis via de novo pathway; UDP from UMP (UMPK route): step 1/1. Inhibited by UTP. Functionally, catalyzes the reversible phosphorylation of UMP to UDP. This is Uridylate kinase from Archaeoglobus fulgidus (strain ATCC 49558 / DSM 4304 / JCM 9628 / NBRC 100126 / VC-16).